The chain runs to 421 residues: FBD-associated F-box protein At5g56370 (421 aa).

Residues 1–52 (MDSISLLPDDFLLRILSLLPTKDVLNTSVLSKRWRYLWKLVPKLQYSLIDKN) form the F-box domain. The region spanning 332-382 (HWEEPSSVPETLMFVLETLEWRNYRGLKMENELASFLLKHSRRLKIATFSP) is the FBD domain.

The polypeptide is FBD-associated F-box protein At5g56370 (Arabidopsis thaliana (Mouse-ear cress)).